The sequence spans 173 residues: T-cell surface glycoprotein CD3 gamma chain (173 aa).

Residues 1-22 form the signal peptide; the sequence is MEQGKHLAGLILAVFLLQGTMA. The Extracellular segment spans residues 23-111; the sequence is HVKEVKVDDN…NCIELNPSTV (89 aa). Residues 24–94 form the Ig-like domain; it reads VKEVKVDDNR…GSNNQSKSLQ (71 aa). Residues C42 and C83 are joined by a disulfide bond. Residues N45 and N88 are each glycosylated (N-linked (GlcNAc...) asparagine). A helical membrane pass occupies residues 112–132; the sequence is AGFIFTEIVSIFLLAVGVYFI. Topologically, residues 133-173 are cytoplasmic; that stretch reads AGQEGVRQSRASDKQTLLNNDQLYQPLKEREDDQYSHLRKN. S141 bears the Phosphoserine mark. A Phosphoserine; by PKC modification is found at S144. The 29-residue stretch at 145-173 folds into the ITAM domain; the sequence is DKQTLLNNDQLYQPLKEREDDQYSHLRKN. The Di-leucine motif signature appears at 149-150; sequence LL.

In terms of assembly, the TCR-CD3 complex is composed of a CD3D/CD3E and a CD3G/CD3E heterodimers that preferentially associate with TCRalpha and TCRbeta, respectively, to form TCRalpha/CD3E/CD3G and TCRbeta/CD3G/CD3E trimers. In turn, the hexamer interacts with CD3Z homodimer to form the TCR-CD3 complex. Alternatively, TCRalpha and TCRbeta can be replaced by TCRgamma and TCRdelta. Phosphorylated on Tyr residues after T-cell receptor triggering by LCK in association with CD4/CD8. Phosphorylated also by PKC; leading to the TCR complex down-regulation. In terms of processing, phosphorylated on Tyr residues after T-cell receptor triggering by LCK in association with CD4/CD8.

Its subcellular location is the cell membrane. Functionally, part of the TCR-CD3 complex present on T-lymphocyte cell surface that plays an essential role in adaptive immune response. When antigen presenting cells (APCs) activate T-cell receptor (TCR), TCR-mediated signals are transmitted across the cell membrane by the CD3 chains CD3D, CD3E, CD3G and CD3Z. All CD3 chains contain immunoreceptor tyrosine-based activation motifs (ITAMs) in their cytoplasmic domain. Upon TCR engagement, these motifs become phosphorylated by Src family protein tyrosine kinases LCK and FYN, resulting in the activation of downstream signaling pathways. In addition to this role of signal transduction in T-cell activation, CD3G plays an essential role in the dynamic regulation of TCR expression at the cell surface. Indeed, constitutive TCR cycling is dependent on the di-leucine-based (diL) receptor-sorting motif present in CD3G. This is T-cell surface glycoprotein CD3 gamma chain (CD3G) from Bos taurus (Bovine).